We begin with the raw amino-acid sequence, 411 residues long: LL-diaminopimelate aminotransferase (411 aa).

Substrate is bound by residues Y16 and G43. Pyridoxal 5'-phosphate is bound by residues Y73, A109 to K110, Y133, N188, Y219, and S247 to S249. Substrate contacts are provided by K110, Y133, and N188. K250 is modified (N6-(pyridoxal phosphate)lysine). Residues R258 and N293 each coordinate pyridoxal 5'-phosphate. Positions 293 and 389 each coordinate substrate.

Belongs to the class-I pyridoxal-phosphate-dependent aminotransferase family. LL-diaminopimelate aminotransferase subfamily. Homodimer. Requires pyridoxal 5'-phosphate as cofactor.

The catalysed reaction is (2S,6S)-2,6-diaminopimelate + 2-oxoglutarate = (S)-2,3,4,5-tetrahydrodipicolinate + L-glutamate + H2O + H(+). Its pathway is amino-acid biosynthesis; L-lysine biosynthesis via DAP pathway; LL-2,6-diaminopimelate from (S)-tetrahydrodipicolinate (aminotransferase route): step 1/1. Involved in the synthesis of meso-diaminopimelate (m-DAP or DL-DAP), required for both lysine and peptidoglycan biosynthesis. Catalyzes the direct conversion of tetrahydrodipicolinate to LL-diaminopimelate. The protein is LL-diaminopimelate aminotransferase of Methanobrevibacter smithii (strain ATCC 35061 / DSM 861 / OCM 144 / PS).